We begin with the raw amino-acid sequence, 140 residues long: Large-conductance mechanosensitive channel (140 aa).

2 helical membrane passes run 16–36 (VIDL…VTAL) and 84–104 (INTV…VKLI).

It belongs to the MscL family. In terms of assembly, homopentamer.

It is found in the cell inner membrane. In terms of biological role, channel that opens in response to stretch forces in the membrane lipid bilayer. May participate in the regulation of osmotic pressure changes within the cell. This Xanthomonas oryzae pv. oryzae (strain PXO99A) protein is Large-conductance mechanosensitive channel.